A 172-amino-acid chain; its full sequence is MDRTAKADLVSTLNGVFNANAVVVVAHYKGLTVADMQKLRSQMKQAGATVKVAKNRLASIALDGTDVASIKPLLKGPTLLAYSSDPVAAAKVAVDFAKTNDKLVILGGAMGTTALNPDGVKALASLPSLDELRAKLVGLIQAPATKVAQVVNAPAAKLARVFGAYAKKDEAA.

It belongs to the universal ribosomal protein uL10 family. Part of the ribosomal stalk of the 50S ribosomal subunit. The N-terminus interacts with L11 and the large rRNA to form the base of the stalk. The C-terminus forms an elongated spine to which L12 dimers bind in a sequential fashion forming a multimeric L10(L12)X complex.

Forms part of the ribosomal stalk, playing a central role in the interaction of the ribosome with GTP-bound translation factors. The sequence is that of Large ribosomal subunit protein uL10 from Methylorubrum extorquens (strain CM4 / NCIMB 13688) (Methylobacterium extorquens).